The primary structure comprises 557 residues: Aerobic glycerol-3-phosphate dehydrogenase (557 aa).

21–49 (DVVIVGGGITGAGIALDASNRGMKVALVE) contacts FAD.

It belongs to the FAD-dependent glycerol-3-phosphate dehydrogenase family. The cofactor is FAD.

It localises to the cytoplasm. It catalyses the reaction a quinone + sn-glycerol 3-phosphate = dihydroxyacetone phosphate + a quinol. Its pathway is polyol metabolism; glycerol degradation via glycerol kinase pathway; glycerone phosphate from sn-glycerol 3-phosphate (aerobic route): step 1/1. The protein is Aerobic glycerol-3-phosphate dehydrogenase (glpD) of Staphylococcus epidermidis (strain ATCC 35984 / DSM 28319 / BCRC 17069 / CCUG 31568 / BM 3577 / RP62A).